We begin with the raw amino-acid sequence, 119 residues long: UPF0344 protein lp_1373 (119 aa).

Helical transmembrane passes span 1–21 (MYLLGHIIGWLWLMLTVAIGL), 32–52 (FLILSRIGYLLIIITGVALAI), 60–80 (WLTLLKVILGLGTIGLIEVAF), and 92–112 (LVTLLVCGTLLTIICGIGLHW).

Belongs to the UPF0344 family.

It localises to the cell membrane. The chain is UPF0344 protein lp_1373 from Lactiplantibacillus plantarum (strain ATCC BAA-793 / NCIMB 8826 / WCFS1) (Lactobacillus plantarum).